A 509-amino-acid chain; its full sequence is Maturase K (509 aa).

It belongs to the intron maturase 2 family. MatK subfamily.

It localises to the plastid. Its subcellular location is the chloroplast. Its function is as follows. Usually encoded in the trnK tRNA gene intron. Probably assists in splicing its own and other chloroplast group II introns. This is Maturase K from Atropa belladonna (Belladonna).